The sequence spans 185 residues: Transcriptional repressor NrdR (185 aa).

Residues 1 to 24 (MRCPFCGGPDTQVKDSRPSEDSSA) are disordered. A zinc finger lies at 3 to 34 (CPFCGGPDTQVKDSRPSEDSSAIRRRRVCPDC). Over residues 12–24 (QVKDSRPSEDSSA) the composition is skewed to basic and acidic residues. Positions 49 to 139 (LVVLKRSGKR…VYKNFREAQD (91 aa)) constitute an ATP-cone domain. Positions 148–185 (GERLDGEGDLPEQGDAVPAPPDEAVAAPRRGRPARKRA) are disordered. Over residues 176-185 (RRGRPARKRA) the composition is skewed to basic residues.

The protein belongs to the NrdR family. The cofactor is Zn(2+).

Functionally, negatively regulates transcription of bacterial ribonucleotide reductase nrd genes and operons by binding to NrdR-boxes. The chain is Transcriptional repressor NrdR from Methylorubrum extorquens (strain CM4 / NCIMB 13688) (Methylobacterium extorquens).